A 44-amino-acid chain; its full sequence is Cytochrome b559 subunit beta (44 aa).

The helical transmembrane segment at 19 to 35 threads the bilayer; that stretch reads WVSIHALAVPTIFFLGS. Position 23 (His23) interacts with heme.

This sequence belongs to the PsbE/PsbF family. In terms of assembly, heterodimer of an alpha subunit and a beta subunit. PSII is composed of 1 copy each of membrane proteins PsbA, PsbB, PsbC, PsbD, PsbE, PsbF, PsbH, PsbI, PsbJ, PsbK, PsbL, PsbM, PsbT, PsbX, PsbY, PsbZ, Psb30/Ycf12, at least 3 peripheral proteins of the oxygen-evolving complex and a large number of cofactors. It forms dimeric complexes. The cofactor is heme b.

The protein resides in the plastid. It localises to the chloroplast thylakoid membrane. Its function is as follows. This b-type cytochrome is tightly associated with the reaction center of photosystem II (PSII). PSII is a light-driven water:plastoquinone oxidoreductase that uses light energy to abstract electrons from H(2)O, generating O(2) and a proton gradient subsequently used for ATP formation. It consists of a core antenna complex that captures photons, and an electron transfer chain that converts photonic excitation into a charge separation. This Chlamydomonas moewusii (Chlamydomonas eugametos) protein is Cytochrome b559 subunit beta.